The sequence spans 132 residues: Small ribosomal subunit protein eS12 (132 aa).

Position 2 is an N-acetylalanine (Ala-2). Position 129 is an N6-succinyllysine (Lys-129).

Belongs to the eukaryotic ribosomal protein eS12 family. Part of the small subunit (SSU) processome, composed of more than 70 proteins and the RNA chaperone small nucleolar RNA (snoRNA) U3. Subunit of the 40S ribosomal complex.

It localises to the nucleus. It is found in the nucleolus. Functionally, part of the small subunit (SSU) processome, first precursor of the small eukaryotic ribosomal subunit. During the assembly of the SSU processome in the nucleolus, many ribosome biogenesis factors, an RNA chaperone and ribosomal proteins associate with the nascent pre-rRNA and work in concert to generate RNA folding, modifications, rearrangements and cleavage as well as targeted degradation of pre-ribosomal RNA by the RNA exosome. Subunit of the 40S ribosomal complex. The protein is Small ribosomal subunit protein eS12 (Rps12) of Mus musculus (Mouse).